A 647-amino-acid chain; its full sequence is Protein FAM161B (647 aa).

3 disordered regions span residues methionine 1–leucine 39, serine 89–aspartate 110, and leucine 135–serine 167. Acidic residues predominate over residues proline 91 to glutamate 105. Positions leucine 262 to arginine 292 form a coiled coil. Polar residues predominate over residues proline 332–threonine 350. 2 disordered regions span residues proline 332 to glutamine 352 and lysine 388 to serine 439. The stretch at leucine 510–arginine 546 forms a coiled coil. A disordered region spans residues lysine 583 to alanine 647. Basic and acidic residues predominate over residues valine 590–arginine 602. A compositionally biased stretch (polar residues) spans histidine 637 to alanine 647.

This sequence belongs to the FAM161 family. As to quaternary structure, interacts with FAM161A. As to expression, ubiquitously expressed.

The polypeptide is Protein FAM161B (FAM161B) (Homo sapiens (Human)).